The following is a 130-amino-acid chain: Small ribosomal subunit protein uS9 (130 aa).

Belongs to the universal ribosomal protein uS9 family.

The polypeptide is Small ribosomal subunit protein uS9 (Photorhabdus laumondii subsp. laumondii (strain DSM 15139 / CIP 105565 / TT01) (Photorhabdus luminescens subsp. laumondii)).